A 1036-amino-acid chain; its full sequence is Protein P200 (1036 aa).

The disordered stretch occupies residues 697 to 727 (ETSELNTESDPSFEPEVEIQPEPEPNFDLET). Over residues 707–727 (PSFEPEVEIQPEPEPNFDLET) the composition is skewed to acidic residues. 3 tandem repeats follow at residues 718–723 (EPEPNF), 738–743 (EPEPNF), and 776–781 (EPEPNF). Residues 718-781 (EPEPNFDLET…SFESEPEPNF (64 aa)) form a 3 X 6 AA repeats of E-P-E-P-N-F region. 2 disordered regions span residues 757–784 (FESETEVQQELAQESSFESEPEPNFETE) and 798–845 (EAEV…ETEA). Over residues 773–784 (FESEPEPNFETE) the composition is skewed to acidic residues.

It is found in the cell projection. It localises to the attachment organelle. In terms of biological role, protein cytoskeleton-associated which plays a role in gliding motility and perhaps also in mucociliary clearance. This chain is Protein P200 (p200), found in Mycoplasma pneumoniae (strain ATCC 29342 / M129 / Subtype 1) (Mycoplasmoides pneumoniae).